A 119-amino-acid polypeptide reads, in one-letter code: Large ribosomal subunit protein uL18 (119 aa).

It belongs to the universal ribosomal protein uL18 family. Part of the 50S ribosomal subunit; part of the 5S rRNA/L5/L18/L25 subcomplex. Contacts the 5S and 23S rRNAs.

Functionally, this is one of the proteins that bind and probably mediate the attachment of the 5S RNA into the large ribosomal subunit, where it forms part of the central protuberance. The sequence is that of Large ribosomal subunit protein uL18 from Nitratidesulfovibrio vulgaris (strain DSM 19637 / Miyazaki F) (Desulfovibrio vulgaris).